Consider the following 119-residue polypeptide: MMNAKALYKKKALRDRRKLRIKSKLLGDALRPRVSVFRSNRYFYAQAIDDVKQSTITHIDGRKMGFKNTQEDAKKLGALFAEELKKAGIERAVYDRNGYLYHGVVAAFAESLRENGIAL.

It belongs to the universal ribosomal protein uL18 family. Part of the 50S ribosomal subunit; part of the 5S rRNA/L5/L18/L25 subcomplex. Contacts the 5S and 23S rRNAs.

This is one of the proteins that bind and probably mediate the attachment of the 5S RNA into the large ribosomal subunit, where it forms part of the central protuberance. The protein is Large ribosomal subunit protein uL18 of Helicobacter pylori (strain HPAG1).